Reading from the N-terminus, the 373-residue chain is Polygalacturonase (373 aa).

A signal peptide spans 1–24 (MVRNIVSRLCSQLFALPSSSLQER). Cysteine 27 and cysteine 42 are disulfide-bonded. N-linked (GlcNAc...) asparagine glycans are attached at residues asparagine 65 and asparagine 94. PbH1 repeat units follow at residues 136 to 158 (TGNSKITNLNIQNWPVHCFDITG), 159 to 197 (SSQLTISGLILDNRAGDKPNAKSGSLPAAHNTDGFDISS), 198 to 219 (SDHVTLDNNHVYNQDDCVAVTS), 220 to 240 (GTNIVVSNMYCSGGHGLSIGS), 249 to 270 (VDGVQFLSSQVVNSQNGCRIKS), 278 to 300 (INNVTYQNIALTNISTYGVDVQQ), 312 to 333 (TNGVKISNIKFIKVTGTVASSA), and 345 to 369 (CSGFTFSGNAITGGGKTSSCNYPTN). Aspartate 212 serves as the catalytic Proton donor. A disulfide bond links cysteine 214 and cysteine 230. Histidine 234 is a catalytic residue. N-linked (GlcNAc...) asparagine glycans are attached at residues asparagine 280 and asparagine 290. 2 disulfides stabilise this stretch: cysteine 340–cysteine 345 and cysteine 364–cysteine 371.

It belongs to the glycosyl hydrolase 28 family.

Its subcellular location is the secreted. It carries out the reaction (1,4-alpha-D-galacturonosyl)n+m + H2O = (1,4-alpha-D-galacturonosyl)n + (1,4-alpha-D-galacturonosyl)m.. In terms of biological role, involved in maceration and soft-rotting of plant tissue. Hydrolyzes the 1,4-alpha glycosidic bonds of de-esterified pectate in the smooth region of the plant cell wall. The sequence is that of Polygalacturonase (PGA) from Fusarium fujikuroi (Bakanae and foot rot disease fungus).